The chain runs to 539 residues: ATP-dependent RNA helicase MRH4, mitochondrial (539 aa).

Residues M1–A24 constitute a mitochondrion transit peptide. The Q motif motif lies at S81–A109. In terms of domain architecture, Helicase ATP-binding spans T131 to I319. Residue A144–T151 coordinates ATP. The DEAD box signature appears at D267 to D270. Positions A350–K539 constitute a Helicase C-terminal domain.

It belongs to the DEAD box helicase family. MRH4 subfamily.

The protein localises to the mitochondrion. The catalysed reaction is ATP + H2O = ADP + phosphate + H(+). ATP-binding RNA helicase involved in mitochondrial RNA metabolism. Required for maintenance of mitochondrial DNA. The sequence is that of ATP-dependent RNA helicase MRH4, mitochondrial (MRH4) from Vanderwaltozyma polyspora (strain ATCC 22028 / DSM 70294 / BCRC 21397 / CBS 2163 / NBRC 10782 / NRRL Y-8283 / UCD 57-17) (Kluyveromyces polysporus).